The sequence spans 170 residues: ATP synthase subunit b (170 aa).

A helical membrane pass occupies residues 15–37 (FNLFETNILNWAVVVFGLYKFLP).

It belongs to the ATPase B chain family. As to quaternary structure, F-type ATPases have 2 components, F(1) - the catalytic core - and F(0) - the membrane proton channel. F(1) has five subunits: alpha(3), beta(3), gamma(1), delta(1), epsilon(1). F(0) has four main subunits: a(1), b(1), b'(1) and c(10-14). The alpha and beta chains form an alternating ring which encloses part of the gamma chain. F(1) is attached to F(0) by a central stalk formed by the gamma and epsilon chains, while a peripheral stalk is formed by the delta, b and b' chains.

It is found in the cellular thylakoid membrane. Functionally, f(1)F(0) ATP synthase produces ATP from ADP in the presence of a proton or sodium gradient. F-type ATPases consist of two structural domains, F(1) containing the extramembraneous catalytic core and F(0) containing the membrane proton channel, linked together by a central stalk and a peripheral stalk. During catalysis, ATP synthesis in the catalytic domain of F(1) is coupled via a rotary mechanism of the central stalk subunits to proton translocation. Its function is as follows. Component of the F(0) channel, it forms part of the peripheral stalk, linking F(1) to F(0). The protein is ATP synthase subunit b of Prochlorococcus marinus (strain MIT 9312).